Reading from the N-terminus, the 183-residue chain is MAAAMMNKTVVVGKESVKGGVAPKVAMSRGGFLNSGIMKKDRDMMVWQPFNNKMFETFSYLPPLTDEQISKQVDYILANSWTPCLEFAASDQAYAGNENCIRMGPVASTYQDNRYWTMWKLPMFGCTDGSQVLSDMQACTKAFPDAYIRLVCFDANRQVQICGFLVHRPPSATDYRLPADRQV.

A chloroplast-targeting transit peptide spans 1-43; the sequence is MAAAMMNKTVVVGKESVKGGVAPKVAMSRGGFLNSGIMKKDRD.

It belongs to the RuBisCO small chain family. As to quaternary structure, heterohexadecamer of 8 large and 8 small subunits.

The protein localises to the plastid. The protein resides in the chloroplast. In terms of biological role, ruBisCO catalyzes two reactions: the carboxylation of D-ribulose 1,5-bisphosphate, the primary event in carbon dioxide fixation, as well as the oxidative fragmentation of the pentose substrate. Both reactions occur simultaneously and in competition at the same active site. Although the small subunit is not catalytic it is essential for maximal activity. This Acetabularia peniculus (Green alga) protein is Ribulose bisphosphate carboxylase small subunit, chloroplastic 7.